The sequence spans 567 residues: Urease subunit alpha (567 aa).

One can recognise a Urease domain in the interval 129-567 (GGIDAHIHFI…LPMAQRYFLF (439 aa)). Ni(2+) contacts are provided by His-134, His-136, and Lys-217. Lys-217 is modified (N6-carboxylysine). His-219 contributes to the substrate binding site. The Ni(2+) site is built by His-246 and His-272. The active-site Proton donor is His-320. Residue Asp-360 participates in Ni(2+) binding.

It belongs to the metallo-dependent hydrolases superfamily. Urease alpha subunit family. Heterotrimer of UreA (gamma), UreB (beta) and UreC (alpha) subunits. Three heterotrimers associate to form the active enzyme. It depends on Ni cation as a cofactor. In terms of processing, carboxylation allows a single lysine to coordinate two nickel ions.

The protein localises to the cytoplasm. The enzyme catalyses urea + 2 H2O + H(+) = hydrogencarbonate + 2 NH4(+). It functions in the pathway nitrogen metabolism; urea degradation; CO(2) and NH(3) from urea (urease route): step 1/1. This chain is Urease subunit alpha, found in Teredinibacter turnerae (strain ATCC 39867 / T7901).